The following is a 155-amino-acid chain: MSGMNQVVATCWTCLLLSAFLCEPVLSKGGRGGSRGSSRGSHSRSPKAGGYRGGGPHNGGTRGSRYRGRSSPVRVASAAAAGAAVALTADKWYASAYRRSKADGSDEELDYYNRTNYFDAQMSSSTQNGSSLSQLVSIIIATFSPKYGLLMDSIL.

An N-terminal signal peptide occupies residues Met-1–Ser-27. Residues Gly-29–Ser-71 are disordered. Over residues Gly-50–Arg-62 the composition is skewed to gly residues. Asn-113 carries N-linked (GlcNAc...) asparagine glycosylation. A lipid anchor (GPI-anchor amidated serine) is attached at Ser-125. A propeptide spans Thr-126 to Leu-155 (removed in mature form). N-linked (GlcNAc...) asparagine glycosylation is present at Asn-128.

Belongs to the SPRN family.

The protein localises to the cell membrane. Its function is as follows. Prion-like protein that has PrP(C)-like neuroprotective activity. This is Shadow of prion protein (sprn) from Gasterosteus aculeatus (Three-spined stickleback).